Reading from the N-terminus, the 231-residue chain is Large ribosomal subunit protein uL1 (231 aa).

The protein belongs to the universal ribosomal protein uL1 family. As to quaternary structure, part of the 50S ribosomal subunit.

In terms of biological role, binds directly to 23S rRNA. The L1 stalk is quite mobile in the ribosome, and is involved in E site tRNA release. Functionally, protein L1 is also a translational repressor protein, it controls the translation of the L11 operon by binding to its mRNA. The chain is Large ribosomal subunit protein uL1 from Stutzerimonas stutzeri (strain A1501) (Pseudomonas stutzeri).